Here is a 218-residue protein sequence, read N- to C-terminus: MGRIFLTGEKANSVLKRYPRANGLFEEIRQGNIERECKEEVCTFEEAREAFENNEKTKEFWNTYTKAQQGESNRGSDWFQFYLTFPLIFGLFIILLVIFLIWRCFLRNKTRRQTVTESHIPFPQHLNIITTPPPPDEVFDNSGLSPGFLEYVVGRSDSVSTRLSNCDPPPTYEEATGQMNLRRSETEPHLDPPPEYEDIINSNSASAIAMVPVATTIK.

The propeptide occupies 1–20 (MGRIFLTGEKANSVLKRYPR). In terms of domain architecture, Gla spans 20-66 (RANGLFEEIRQGNIERECKEEVCTFEEAREAFENNEKTKEFWNTYTK). Over 21–80 (ANGLFEEIRQGNIERECKEEVCTFEEAREAFENNEKTKEFWNTYTKAQQGESNRGSDWFQ) the chain is Extracellular. Cys-37 and Cys-42 are joined by a disulfide. A helical transmembrane segment spans residues 81–101 (FYLTFPLIFGLFIILLVIFLI). At 102–218 (WRCFLRNKTR…AMVPVATTIK (117 aa)) the chain is on the cytoplasmic side. The tract at residues 160-192 (STRLSNCDPPPTYEEATGQMNLRRSETEPHLDP) is disordered. Over residues 182-192 (RRSETEPHLDP) the composition is skewed to basic and acidic residues.

In terms of processing, gla residues are produced after subsequent post-translational modifications of glutamate by a vitamin K-dependent gamma-carboxylase.

It is found in the membrane. The protein is Transmembrane gamma-carboxyglutamic acid protein 1 (PRRG1) of Bos taurus (Bovine).